Consider the following 127-residue polypeptide: UPF0212 protein VNG_1264C (127 aa).

Belongs to the UPF0212 family.

This chain is UPF0212 protein VNG_1264C, found in Halobacterium salinarum (strain ATCC 700922 / JCM 11081 / NRC-1) (Halobacterium halobium).